A 199-amino-acid polypeptide reads, in one-letter code: Protein GrpE (199 aa).

The protein belongs to the GrpE family. In terms of assembly, homodimer.

Its subcellular location is the cytoplasm. Functionally, participates actively in the response to hyperosmotic and heat shock by preventing the aggregation of stress-denatured proteins, in association with DnaK and GrpE. It is the nucleotide exchange factor for DnaK and may function as a thermosensor. Unfolded proteins bind initially to DnaJ; upon interaction with the DnaJ-bound protein, DnaK hydrolyzes its bound ATP, resulting in the formation of a stable complex. GrpE releases ADP from DnaK; ATP binding to DnaK triggers the release of the substrate protein, thus completing the reaction cycle. Several rounds of ATP-dependent interactions between DnaJ, DnaK and GrpE are required for fully efficient folding. The polypeptide is Protein GrpE (Fusobacterium nucleatum subsp. nucleatum (strain ATCC 25586 / DSM 15643 / BCRC 10681 / CIP 101130 / JCM 8532 / KCTC 2640 / LMG 13131 / VPI 4355)).